The primary structure comprises 313 residues: Porphobilinogen deaminase (313 aa).

Cys-242 bears the S-(dipyrrolylmethanemethyl)cysteine mark.

The protein belongs to the HMBS family. As to quaternary structure, monomer. Dipyrromethane serves as cofactor.

It catalyses the reaction 4 porphobilinogen + H2O = hydroxymethylbilane + 4 NH4(+). The protein operates within porphyrin-containing compound metabolism; protoporphyrin-IX biosynthesis; coproporphyrinogen-III from 5-aminolevulinate: step 2/4. Its function is as follows. Tetrapolymerization of the monopyrrole PBG into the hydroxymethylbilane pre-uroporphyrinogen in several discrete steps. This is Porphobilinogen deaminase from Escherichia coli O45:K1 (strain S88 / ExPEC).